A 914-amino-acid chain; its full sequence is Probable dipeptidyl-aminopeptidase B (914 aa).

Residues 1 to 10 (MATFSDHETS) show a composition bias toward basic and acidic residues. The segment at 1–63 (MATFSDHETS…TGMDNGDRYR (63 aa)) is disordered. The Cytoplasmic portion of the chain corresponds to 1-91 (MATFSDHETS…KAATGGRARR (91 aa)). A compositionally biased stretch (low complexity) spans 20–35 (STSSASQTSSDSGLSS). Residues 45–56 (QPFSAPNGTTGM) show a composition bias toward polar residues. A helical; Signal-anchor for type II membrane protein transmembrane segment spans residues 92–112 (IFWLLVLLCFGGWLLAFVLFL). The Vacuolar portion of the chain corresponds to 113-914 (TGGRANYQSA…RFKRSLPVLV (802 aa)). N-linked (GlcNAc...) asparagine glycans are attached at residues Asn-348, Asn-565, and Asn-639. Ser-753 functions as the Charge relay system in the catalytic mechanism. N-linked (GlcNAc...) asparagine glycosylation occurs at Asn-807. Catalysis depends on charge relay system residues Asp-830 and His-863.

It belongs to the peptidase S9B family.

The protein resides in the vacuole membrane. The enzyme catalyses Release of an N-terminal dipeptide, Xaa-Yaa-|-Zaa-, from a polypeptide, preferentially when Yaa is Pro, provided Zaa is neither Pro nor hydroxyproline.. Type IV dipeptidyl-peptidase which removes N-terminal dipeptides sequentially from polypeptides having unsubstituted N-termini provided that the penultimate residue is proline. In Aspergillus clavatus (strain ATCC 1007 / CBS 513.65 / DSM 816 / NCTC 3887 / NRRL 1 / QM 1276 / 107), this protein is Probable dipeptidyl-aminopeptidase B (dapB).